The sequence spans 644 residues: Zinc finger protein 74 (644 aa).

In terms of domain architecture, KRAB spans 43–114; sequence VSFKDVAVDF…QREVPRGPCP (72 aa). 12 C2H2-type zinc fingers span residues 248–270, 276–298, 304–326, 332–354, 360–382, 388–410, 416–438, 444–466, 472–494, 500–522, 528–550, and 556–578; these read FVCG…RRWH, YKCD…RRIH, FFCG…QRIH, YKCS…LRVH, YRCG…HRIH, YQCG…EKIH, FKCS…QRTH, FKCA…RRIH, FKCN…RRIH, FDCS…QRIH, YKCS…QKIH, and FKCE…QRLH. A Glycyl lysine isopeptide (Lys-Gly) (interchain with G-Cter in SUMO2) cross-link involves residue lysine 582.

Belongs to the krueppel C2H2-type zinc-finger protein family. As to expression, highly expressed in the fetal brain.

Its subcellular location is the nucleus. Its function is as follows. May play a role in RNA metabolism. The sequence is that of Zinc finger protein 74 (ZNF74) from Homo sapiens (Human).